The primary structure comprises 165 residues: Nucleotide-binding protein CFF8240_1664 (165 aa).

Belongs to the YajQ family.

Functionally, nucleotide-binding protein. In Campylobacter fetus subsp. fetus (strain 82-40), this protein is Nucleotide-binding protein CFF8240_1664.